Here is a 267-residue protein sequence, read N- to C-terminus: Undecaprenyl-diphosphatase (267 aa).

The next 8 helical transmembrane spans lie at 1–21 (MTYFEAFFLALLQGFTEFLPI), 39–59 (QGLAFDVAVHVGTLAAVVIYF), 83–103 (SNLAWLIVLATIPAALFGLLF), 111–131 (LRSAWVIAATTIVFGLLLWWV), 149–169 (ALFLGIAQAMAMIPGTSRSGI), 189–209 (FLMSIPIITLAGSYLGLKLAM), 218–238 (LLSTGVIVSFISAYICIHFFL), and 246–266 (MMPFVIYRILLGSSLLVWLAL).

It belongs to the UppP family.

It is found in the cell inner membrane. The enzyme catalyses di-trans,octa-cis-undecaprenyl diphosphate + H2O = di-trans,octa-cis-undecaprenyl phosphate + phosphate + H(+). Functionally, catalyzes the dephosphorylation of undecaprenyl diphosphate (UPP). Confers resistance to bacitracin. The chain is Undecaprenyl-diphosphatase from Aliivibrio fischeri (strain MJ11) (Vibrio fischeri).